The chain runs to 421 residues: D-amino acid dehydrogenase (421 aa).

3 to 17 (VIVLGSGVIGVASAY) is a binding site for FAD.

The protein belongs to the DadA oxidoreductase family. The cofactor is FAD.

The enzyme catalyses a D-alpha-amino acid + A + H2O = a 2-oxocarboxylate + AH2 + NH4(+). The protein operates within amino-acid degradation; D-alanine degradation; NH(3) and pyruvate from D-alanine: step 1/1. In terms of biological role, oxidative deamination of D-amino acids. This Acinetobacter baumannii (strain AB307-0294) protein is D-amino acid dehydrogenase.